Reading from the N-terminus, the 225-residue chain is J-type co-chaperone jac1, mitochondrial (225 aa).

A mitochondrion-targeting transit peptide spans 1-49; the sequence is MLKQAGNQSFRPFISFAQKSLFNRQITGNHWIFARFKFYPLNKIVNYNH. One can recognise a J domain in the interval 61–137; it reads NFYKQFEGDI…LTRAEYILQL (77 aa). Positions 98-100 match the HSP70 binding motif; it reads HPD.

This sequence belongs to the HscB family. Interacts with ssc1.

Its subcellular location is the mitochondrion matrix. Functionally, co-chaperone required for the assembly of iron-sulfur (Fe/S) clusters in mitochondria. Stimulates the ATPase activity of the mitochondrial Hsp70 chaperone ssc1, to mediate the transfer of iron-sulfur clusters from isu1 to grx5. In Schizosaccharomyces pombe (strain 972 / ATCC 24843) (Fission yeast), this protein is J-type co-chaperone jac1, mitochondrial.